A 363-amino-acid chain; its full sequence is Phosphoserine aminotransferase (363 aa).

Residue Arg-42 coordinates L-glutamate. Residues 76–77, Trp-104, Thr-155, Asp-175, and Gln-198 each bind pyridoxal 5'-phosphate; that span reads AR. Lys-199 bears the N6-(pyridoxal phosphate)lysine mark. 240 to 241 is a binding site for pyridoxal 5'-phosphate; the sequence is NT.

The protein belongs to the class-V pyridoxal-phosphate-dependent aminotransferase family. SerC subfamily. As to quaternary structure, homodimer. Pyridoxal 5'-phosphate serves as cofactor.

The protein localises to the cytoplasm. It carries out the reaction O-phospho-L-serine + 2-oxoglutarate = 3-phosphooxypyruvate + L-glutamate. It catalyses the reaction 4-(phosphooxy)-L-threonine + 2-oxoglutarate = (R)-3-hydroxy-2-oxo-4-phosphooxybutanoate + L-glutamate. Its pathway is amino-acid biosynthesis; L-serine biosynthesis; L-serine from 3-phospho-D-glycerate: step 2/3. It functions in the pathway cofactor biosynthesis; pyridoxine 5'-phosphate biosynthesis; pyridoxine 5'-phosphate from D-erythrose 4-phosphate: step 3/5. Functionally, catalyzes the reversible conversion of 3-phosphohydroxypyruvate to phosphoserine and of 3-hydroxy-2-oxo-4-phosphonooxybutanoate to phosphohydroxythreonine. In Edwardsiella ictaluri (strain 93-146), this protein is Phosphoserine aminotransferase (serC).